The primary structure comprises 465 residues: Glutamate--tRNA ligase (465 aa).

Positions 10-20 (PSPTGQLHIGG) match the 'HIGH' region motif. Zn(2+) contacts are provided by C99, C101, C126, and E128. Residues 236 to 240 (KLSKR) carry the 'KMSKS' region motif. K239 provides a ligand contact to ATP.

This sequence belongs to the class-I aminoacyl-tRNA synthetase family. Glutamate--tRNA ligase type 1 subfamily. Monomer. Zn(2+) is required as a cofactor.

It is found in the cytoplasm. The catalysed reaction is tRNA(Glu) + L-glutamate + ATP = L-glutamyl-tRNA(Glu) + AMP + diphosphate. Functionally, catalyzes the attachment of glutamate to tRNA(Glu) in a two-step reaction: glutamate is first activated by ATP to form Glu-AMP and then transferred to the acceptor end of tRNA(Glu). This Lawsonia intracellularis (strain PHE/MN1-00) protein is Glutamate--tRNA ligase.